The primary structure comprises 509 residues: ATP synthase subunit alpha (509 aa).

169–176 lines the ATP pocket; that stretch reads GDRQTGKT.

The protein belongs to the ATPase alpha/beta chains family. In terms of assembly, F-type ATPases have 2 components, CF(1) - the catalytic core - and CF(0) - the membrane proton channel. CF(1) has five subunits: alpha(3), beta(3), gamma(1), delta(1), epsilon(1). CF(0) has three main subunits: a(1), b(2) and c(9-12). The alpha and beta chains form an alternating ring which encloses part of the gamma chain. CF(1) is attached to CF(0) by a central stalk formed by the gamma and epsilon chains, while a peripheral stalk is formed by the delta and b chains.

The protein localises to the cell inner membrane. It carries out the reaction ATP + H2O + 4 H(+)(in) = ADP + phosphate + 5 H(+)(out). Functionally, produces ATP from ADP in the presence of a proton gradient across the membrane. The alpha chain is a regulatory subunit. This Brucella canis (strain ATCC 23365 / NCTC 10854 / RM-666) protein is ATP synthase subunit alpha.